The sequence spans 30 residues: Brevinin-2Rj (30 aa).

C24 and C30 are oxidised to a cystine.

As to expression, expressed by the skin glands.

The protein resides in the secreted. Antimicrobial peptide. This is Brevinin-2Rj from Pelophylax ridibundus (Marsh frog).